The following is a 729-amino-acid chain: Transketolase (729 aa).

Position 97 (histidine 97) interacts with substrate. Residues histidine 138 and 186 to 188 (GPL) contribute to the thiamine diphosphate site. Aspartate 227 lines the Mg(2+) pocket. Residues glycine 228 and asparagine 257 each coordinate thiamine diphosphate. 2 residues coordinate Mg(2+): asparagine 257 and isoleucine 259. Substrate-binding residues include histidine 332, arginine 423, and serine 450. Histidine 332 lines the thiamine diphosphate pocket. The Proton donor role is filled by glutamate 477. Phenylalanine 503 is a thiamine diphosphate binding site. 3 residues coordinate substrate: histidine 527, aspartate 535, and arginine 586.

This sequence belongs to the transketolase family. Homodimer. Mg(2+) serves as cofactor. Ca(2+) is required as a cofactor. It depends on Mn(2+) as a cofactor. Requires Co(2+) as cofactor. The cofactor is thiamine diphosphate.

The catalysed reaction is D-sedoheptulose 7-phosphate + D-glyceraldehyde 3-phosphate = aldehydo-D-ribose 5-phosphate + D-xylulose 5-phosphate. Its function is as follows. Catalyzes the transfer of a two-carbon ketol group from a ketose donor to an aldose acceptor, via a covalent intermediate with the cofactor thiamine pyrophosphate. This Streptococcus pyogenes serotype M6 (strain ATCC BAA-946 / MGAS10394) protein is Transketolase.